The chain runs to 113 residues: Hydrogenase maturation factor HypA (113 aa).

His-2 provides a ligand contact to Ni(2+). Residues Cys-73, Cys-76, Cys-89, and Cys-92 each coordinate Zn(2+).

This sequence belongs to the HypA/HybF family.

Its function is as follows. Involved in the maturation of [NiFe] hydrogenases. Required for nickel insertion into the metal center of the hydrogenase. In Picosynechococcus sp. (strain ATCC 27264 / PCC 7002 / PR-6) (Agmenellum quadruplicatum), this protein is Hydrogenase maturation factor HypA.